The following is a 255-amino-acid chain: MASNNDSIKKTLFVVIALSLVCSIIVSTAAVGLRDKQKVNAVLDKQSKIVEVAGINESGSVPELFAKYIEPRLIDFKTGNFVDGDATAYDQRKASKDPAQSIKLTAEQDKAKIIRRANTGVVYLVKSGDEISKVIVPVHGNGLWSMMYAFVAVETDGNTVSGITYYEQGETPGLGGEVENPSWRAQFVGKKLFDDNHQPAIKVVKGGAPAGSEHGVDGLSGATLTSNGVQHTFDFWLGDMGFGPFLAKVRDGGLN.

A helical membrane pass occupies residues 12-32; it reads LFVVIALSLVCSIIVSTAAVG. T223 carries the post-translational modification FMN phosphoryl threonine.

This sequence belongs to the NqrC family. In terms of assembly, composed of six subunits; NqrA, NqrB, NqrC, NqrD, NqrE and NqrF. The cofactor is FMN.

The protein localises to the cell inner membrane. The catalysed reaction is a ubiquinone + n Na(+)(in) + NADH + H(+) = a ubiquinol + n Na(+)(out) + NAD(+). Functionally, NQR complex catalyzes the reduction of ubiquinone-1 to ubiquinol by two successive reactions, coupled with the transport of Na(+) ions from the cytoplasm to the periplasm. NqrA to NqrE are probably involved in the second step, the conversion of ubisemiquinone to ubiquinol. The protein is Na(+)-translocating NADH-quinone reductase subunit C of Vibrio anguillarum (Listonella anguillarum).